Here is a 1557-residue protein sequence, read N- to C-terminus: ABC transporter atnG (1557 aa).

5 helical membrane-spanning segments follow: residues Phe-27–Ala-47, Leu-70–Met-90, Leu-99–His-119, Ile-131–Trp-151, and Val-159–Trp-179. 2 N-linked (GlcNAc...) asparagine glycosylation sites follow: Asn-202 and Asn-249. 6 consecutive transmembrane segments (helical) span residues Ala-256–Phe-276, Ala-311–Thr-331, Tyr-385–Asn-405, Ile-412–Ala-432, Leu-490–Phe-510, and Leu-531–Ile-551. Residues Leu-279–Met-556 enclose the ABC transmembrane type-1 1 domain. Residues Ala-593–Ala-829 form the ABC transporter 1 domain. Gly-625–Thr-632 provides a ligand contact to ATP. An N-linked (GlcNAc...) asparagine glycan is attached at Asn-667. The helical transmembrane segment at Leu-882–Val-902 threads the bilayer. An ABC transmembrane type-1 2 domain is found at Leu-882–Thr-1162. A glycan (N-linked (GlcNAc...) asparagine) is linked at Asn-916. Transmembrane regions (helical) follow at residues Ile-921 to Phe-941, Ala-996 to Val-1016, Tyr-1020 to Met-1040, and Leu-1105 to Val-1125. An N-linked (GlcNAc...) asparagine glycan is attached at Asn-1132. Residues Ser-1135–Thr-1155 form a helical membrane-spanning segment. The ABC transporter 2 domain occupies Val-1199–Ser-1431. Asn-1203 and Asn-1218 each carry an N-linked (GlcNAc...) asparagine glycan. Residue Gly-1233–Ser-1240 participates in ATP binding. Disordered stretches follow at residues Glu-1439–Arg-1464 and Arg-1503–His-1557. Over residues Arg-1507–Ser-1522 the composition is skewed to basic and acidic residues.

It belongs to the ABC transporter superfamily. ABCC family. Conjugate transporter (TC 3.A.1.208) subfamily.

Its subcellular location is the cell membrane. Its function is as follows. ABC transporter; part of the gene cluster that mediates the biosynthesis of aspercryptins, linear lipopeptides built from six amino acids including 2 highly unusual and nonproteogenic amino acids, 2-amino-octanoic acid (2aoa) and 2-amino-dodecanol (2adol). This Emericella nidulans (strain FGSC A4 / ATCC 38163 / CBS 112.46 / NRRL 194 / M139) (Aspergillus nidulans) protein is ABC transporter atnG.